The following is a 161-amino-acid chain: Protein-export protein SecB (161 aa).

It belongs to the SecB family. Homotetramer, a dimer of dimers. One homotetramer interacts with 1 SecA dimer.

Its subcellular location is the cytoplasm. Functionally, one of the proteins required for the normal export of preproteins out of the cell cytoplasm. It is a molecular chaperone that binds to a subset of precursor proteins, maintaining them in a translocation-competent state. It also specifically binds to its receptor SecA. In Shewanella baltica (strain OS223), this protein is Protein-export protein SecB.